The following is a 320-amino-acid chain: Putative fatty acid elongase 3 (320 aa).

An N-linked (GlcNAc...) asparagine glycan is attached at asparagine 14. 6 consecutive transmembrane segments (helical) span residues 33 to 53, 67 to 87, 120 to 140, 145 to 165, 203 to 223, and 242 to 262; these read WMQN…AVIF, LDTP…LGFL, FWTE…IFIV, PLIF…WHAY, MAMV…IIGV, and LGLC…FFYH.

This sequence belongs to the ELO family.

The protein localises to the membrane. The enzyme catalyses a very-long-chain acyl-CoA + malonyl-CoA + H(+) = a very-long-chain 3-oxoacyl-CoA + CO2 + CoA. The protein operates within lipid metabolism; fatty acid biosynthesis. In terms of biological role, could be implicated in synthesis of very long chain fatty acids. May be required for normally rapid growth. This chain is Putative fatty acid elongase 3 (elo-3), found in Caenorhabditis elegans.